The sequence spans 968 residues: Glycine dehydrogenase (decarboxylating) (968 aa).

The residue at position 717 (K717) is an N6-(pyridoxal phosphate)lysine.

This sequence belongs to the GcvP family. As to quaternary structure, the glycine cleavage system is composed of four proteins: P, T, L and H. Pyridoxal 5'-phosphate serves as cofactor.

It carries out the reaction N(6)-[(R)-lipoyl]-L-lysyl-[glycine-cleavage complex H protein] + glycine + H(+) = N(6)-[(R)-S(8)-aminomethyldihydrolipoyl]-L-lysyl-[glycine-cleavage complex H protein] + CO2. In terms of biological role, the glycine cleavage system catalyzes the degradation of glycine. The P protein binds the alpha-amino group of glycine through its pyridoxal phosphate cofactor; CO(2) is released and the remaining methylamine moiety is then transferred to the lipoamide cofactor of the H protein. The chain is Glycine dehydrogenase (decarboxylating) from Tropheryma whipplei (strain TW08/27) (Whipple's bacillus).